The chain runs to 371 residues: MNQSYITIFFRTLFVISMTAGSIAAAYYSFPLTYPFLIALILSSVIHPVVDYLDKVTGFPRTINVLGVLAFFLLAAFGVLTILVAEIVTGTAYLAKTLPPHISTFISYCEKLFTTHIQPLYNELTLLFQELETNQQASIVTHIQTLGDSAAKNAGLLLSHILEMIPRFFALLPNTAAVLIFSLLATFFMTKDWHKLKAMLVLILPDRVTANSKAISSELKKAMTGFIKAQAVLVFITMVIVFIGLSLLKVEHAATIAFLIGLVDLLPYLGAGSVFVPWILYLSITGQLPQAIGIGILYLVVLIQRQLTEPKILSKSIGIDPLATLIALFAGFKLFGFLGLIAGPAVLVIIQAFITTGALKEIWSYITVQQK.

The next 9 helical transmembrane spans lie at 6-26, 30-50, 65-85, 168-188, 225-245, 256-276, 283-303, 312-332, and 334-354; these read ITIFFRTLFVISMTAGSIAAA, FPLTYPFLIALILSSVIHPVV, VLGVLAFFLLAAFGVLTILVA, FFALLPNTAAVLIFSLLATFF, GFIKAQAVLVFITMVIVFIGL, IAFLIGLVDLLPYLGAGSVFV, SITGQLPQAIGIGILYLVVLI, ILSKSIGIDPLATLIALFAGF, and LFGFLGLIAGPAVLVIIQAFI.

Belongs to the autoinducer-2 exporter (AI-2E) (TC 2.A.86) family.

It localises to the cell membrane. In Bacillus subtilis (strain 168), this protein is Putative transport protein YtvI (ytvI).